The primary structure comprises 218 residues: Large ribosomal subunit protein uL3 (218 aa).

The protein belongs to the universal ribosomal protein uL3 family. As to quaternary structure, part of the 50S ribosomal subunit. Forms a cluster with proteins L14 and L19.

In terms of biological role, one of the primary rRNA binding proteins, it binds directly near the 3'-end of the 23S rRNA, where it nucleates assembly of the 50S subunit. The chain is Large ribosomal subunit protein uL3 from Corynebacterium urealyticum (strain ATCC 43042 / DSM 7109).